The chain runs to 614 residues: 1-deoxy-D-xylulose-5-phosphate synthase (614 aa).

Thiamine diphosphate contacts are provided by residues H74 and 115 to 117 (AHS). D146 serves as a coordination point for Mg(2+). Thiamine diphosphate-binding positions include 147–148 (GA), N175, Y282, and E363. A Mg(2+)-binding site is contributed by N175.

The protein belongs to the transketolase family. DXPS subfamily. In terms of assembly, homodimer. Requires Mg(2+) as cofactor. The cofactor is thiamine diphosphate.

It carries out the reaction D-glyceraldehyde 3-phosphate + pyruvate + H(+) = 1-deoxy-D-xylulose 5-phosphate + CO2. It functions in the pathway metabolic intermediate biosynthesis; 1-deoxy-D-xylulose 5-phosphate biosynthesis; 1-deoxy-D-xylulose 5-phosphate from D-glyceraldehyde 3-phosphate and pyruvate: step 1/1. Its function is as follows. Catalyzes the acyloin condensation reaction between C atoms 2 and 3 of pyruvate and glyceraldehyde 3-phosphate to yield 1-deoxy-D-xylulose-5-phosphate (DXP). The polypeptide is 1-deoxy-D-xylulose-5-phosphate synthase (Nitrosomonas europaea (strain ATCC 19718 / CIP 103999 / KCTC 2705 / NBRC 14298)).